Here is a 386-residue protein sequence, read N- to C-terminus: mRNA-capping enzyme subunit beta (386 aa).

The disordered stretch occupies residues 1 to 137 (MDIGKMINDD…TTTITGCPPS (137 aa)). Polar residues-rich tracts occupy residues 20–32 (VKSL…TGLP) and 41–56 (KASS…TNEM). Acidic residues predominate over residues 57–67 (ESGEDDDDEDA). Residues 93-115 (RHAERDHRPPPHRQDRRDPRMER) show a composition bias toward basic and acidic residues.

The protein belongs to the fungal TPase family. As to quaternary structure, heterodimer. The mRNA-capping enzyme is composed of two separate chains alpha and beta, respectively a mRNA guanylyltransferase and an mRNA 5'-triphosphate monophosphatase. Mg(2+) serves as cofactor.

Its subcellular location is the nucleus. It catalyses the reaction a 5'-end triphospho-ribonucleoside in mRNA + H2O = a 5'-end diphospho-ribonucleoside in mRNA + phosphate + H(+). In terms of biological role, first step of mRNA capping. Converts the 5'-triphosphate end of a nascent mRNA chain into a diphosphate end. The polypeptide is mRNA-capping enzyme subunit beta (CET1) (Yarrowia lipolytica (strain CLIB 122 / E 150) (Yeast)).